Consider the following 63-residue polypeptide: Large ribosomal subunit protein bL32c (63 aa).

The disordered stretch occupies residues 38-63 (RSFSGVSEHPKPKGFSRQQTNNRVLG). Residues 53–63 (SRQQTNNRVLG) are compositionally biased toward polar residues.

This sequence belongs to the bacterial ribosomal protein bL32 family.

The protein localises to the plastid. The protein resides in the chloroplast. This is Large ribosomal subunit protein bL32c (rpl32) from Oryza sativa (Rice).